The sequence spans 85 residues: Small ribosomal subunit protein bS18 (85 aa).

The protein belongs to the bacterial ribosomal protein bS18 family. Part of the 30S ribosomal subunit. Forms a tight heterodimer with protein bS6.

In terms of biological role, binds as a heterodimer with protein bS6 to the central domain of the 16S rRNA, where it helps stabilize the platform of the 30S subunit. The sequence is that of Small ribosomal subunit protein bS18 from Helicobacter pylori (strain Shi470).